Consider the following 443-residue polypeptide: MSYMTPQEIVHELDKHIIGQDTAKRAVAIALRNRWRRQQVDEPLRHEITPKNILMIGPTGVGKTEIARRLARLANAPFIKIEATKFTEVGYVGRDVDSIIRDLVESAIKQAREREIRKNQPLAEDRAEERILDALLPPARDLGFEASPSEESNATRQKFRKKLREGELDDKEIEIEVAMAQTSMEIFAPPGMEELTSQIQGMFQNMGSGKRKMRKLRIREARKLLTEEEAARLVNDEELKLGAVQNVEQNGIVFLDEIDKITSRSEVSGSDVSRQGVQRDLLPLVEGTTISTKYGMIRTDHILFIASGAFHLAKPSDLIPELQGRFPIRVELESLSAEDFKQILTNTDACLIRQYQALLKTEGIELNFSEDAIGRLAEIAFSVNERTENIGARRLHTVMEKLLEDISFNATRYGGSTHVIDAVYVDERLGKLSQSEDLARYVL.

ATP-binding positions include I18 and 60-65 (GVGKTE). The tract at residues 142–162 (LGFEASPSEESNATRQKFRKK) is disordered. The ATP site is built by D256, E321, and R393.

The protein belongs to the ClpX chaperone family. HslU subfamily. As to quaternary structure, a double ring-shaped homohexamer of HslV is capped on each side by a ring-shaped HslU homohexamer. The assembly of the HslU/HslV complex is dependent on binding of ATP.

The protein localises to the cytoplasm. In terms of biological role, ATPase subunit of a proteasome-like degradation complex; this subunit has chaperone activity. The binding of ATP and its subsequent hydrolysis by HslU are essential for unfolding of protein substrates subsequently hydrolyzed by HslV. HslU recognizes the N-terminal part of its protein substrates and unfolds these before they are guided to HslV for hydrolysis. In Nitrosomonas europaea (strain ATCC 19718 / CIP 103999 / KCTC 2705 / NBRC 14298), this protein is ATP-dependent protease ATPase subunit HslU.